The sequence spans 430 residues: Functional amyloid transporter FapF (430 aa).

Positions 1-24 (MHRSLSLRAVVCLSTLLPASLLYA) are cleaved as a signal peptide. At 25 to 131 (APDVDIETLK…EASGFFGNGK (107 aa)) the chain is on the periplasmic side. Residues 29–64 (DIETLKQELLELKQRYEAQQKALAVLEQRVRQVEDQ) adopt a coiled-coil conformation. The interval 62–114 (EDQPATPAPKRLAKSPADFKQSGSTVAASSGTGGATGGSSYGQSLKDDSEPAQ) is disordered. Residues 92–101 (GTGGATGGSS) are compositionally biased toward gly residues. The interval 113 to 125 (AQSVSNLYNEASG) is alpha helical plug. A beta stranded transmembrane segment spans residues 132-142 (FSFETGITYAR). Over 143–172 (YDARQLTLNGFLALDSIFLGNINLDRIKAD) the chain is Extracellular. A beta stranded membrane pass occupies residues 173 to 183 (NWTLDLTGRYN). At 184-189 (LDNRWQ) the chain is on the periplasmic side. Residues 190–198 (FDVNVPVVY) form a beta stranded membrane-spanning segment. Residues 199–224 (RESTYQSGGASGGDPQATSEESVSRD) lie on the Extracellular side of the membrane. Positions 203–223 (YQSGGASGGDPQATSEESVSR) are disordered. A beta stranded transmembrane segment spans residues 225 to 238 (PTIGDVNFGIAYKF). Residues 239–246 (LDESATMP) are Periplasmic-facing. Residues 247–256 (DAVVSVRVKA) traverse the membrane as a beta stranded segment. Over 257–288 (PTGKEPFGIKLVRSTANDNLYVPESLPTGNGV) the chain is Extracellular. The beta stranded transmembrane segment at 289–298 (WSITPGLSLV) threads the bilayer. At 299 to 304 (KTFDPA) the chain is on the periplasmic side. A beta stranded membrane pass occupies residues 305–314 (VLFGSVSYTH). Residues 315–339 (NLEDSFDDISSDVNQKVGGKVRLGD) lie on the Extracellular side of the membrane. A beta stranded transmembrane segment spans residues 340–348 (SFQFGVGVA). Over 349-356 (FALNERMS) the chain is Periplasmic. A beta stranded membrane pass occupies residues 357–365 (MSFSVSDLI). The Extracellular segment spans residues 366-386 (QRKSKLKPDGGGWQSIVSSDA). A beta stranded membrane pass occupies residues 387–397 (NAGYFNVGMTI). Topologically, residues 398–404 (AASENLT) are periplasmic. A beta stranded membrane pass occupies residues 405 to 412 (IVPNLAIG). Over 413–419 (MTDDAPD) the chain is Extracellular. Residues 420-428 (FTFSLKFPY) form a beta stranded membrane-spanning segment. Over 429–430 (YF) the chain is Periplasmic.

It belongs to the amyloid transporter (TC 9.B.153) family. In terms of assembly, homotrimer.

It localises to the cell outer membrane. Transports fibril components across the outer membrane. Upon overexpression of the endogenous six-gene locus (fapA-fapF) in situ cells form large clumps during liquid growth, make large amounts of biofilm and produce amyloid fibrils. Expression of the 6 gene operon in E.coli strain BL21(DE3) induces flocculation and biofilm formation with copious extracellular fibrils. The polypeptide is Functional amyloid transporter FapF (Pseudomonas fluorescens).